The sequence spans 285 residues: Nucleotide-binding protein HI_1146 (285 aa).

8–15 (GRSGAGKS) is a binding site for ATP. 56–59 (DIRN) is a GTP binding site.

The protein belongs to the RapZ-like family.

Displays ATPase and GTPase activities. This Haemophilus influenzae (strain ATCC 51907 / DSM 11121 / KW20 / Rd) protein is Nucleotide-binding protein HI_1146.